The primary structure comprises 83 residues: Protein CASPARIAN STRIP INTEGRITY FACTOR 2 (83 aa).

Positions 1-28 are cleaved as a signal peptide; the sequence is MGLLPLVKKLGFIIFLLVSASAFALCSA. The tract at residues 61–83 is disordered; it reads SRDYGHSSPKPKLVRPPFKLIPN. Tyrosine 64 carries the sulfotyrosine modification. Residues proline 69 and proline 71 each carry the hydroxyproline modification.

Interacts with the specific receptor kinases GSO1 and GSO2. As to expression, expressed exclusively in the root stele.

Peptide hormone required for contiguous Casparian strip diffusion barrier formation in roots via the regulation of CASPs protein expression and distribution in a GSO1-GSO2 signaling pathway. The Casparian strip is required for ion homeostasis (e.g. iron and potassium ions). The protein is Protein CASPARIAN STRIP INTEGRITY FACTOR 2 of Arabidopsis thaliana (Mouse-ear cress).